The chain runs to 279 residues: Putative E3 ubiquitin-protein ligase C36B7.05c (279 aa).

The FYVE-type zinc-finger motif lies at Asp27 to Ser122. Positions 33, 36, 49, 52, 57, 60, 114, and 117 each coordinate Zn(2+). Residue Ser200 is modified to Phosphoserine. The segment at Cys230–Ala273 adopts an RING-type; atypical zinc-finger fold.

The protein localises to the cytoplasm. It localises to the nucleus. It is found in the endosome membrane. Its subcellular location is the vacuole membrane. It carries out the reaction S-ubiquitinyl-[E2 ubiquitin-conjugating enzyme]-L-cysteine + [acceptor protein]-L-lysine = [E2 ubiquitin-conjugating enzyme]-L-cysteine + N(6)-ubiquitinyl-[acceptor protein]-L-lysine.. The protein operates within protein modification; protein ubiquitination. Functions as an E3 ubiquitin-protein ligase. Binds phospholipid vesicles containing phosphatidylinositol 3-phosphate. This is Putative E3 ubiquitin-protein ligase C36B7.05c from Schizosaccharomyces pombe (strain 972 / ATCC 24843) (Fission yeast).